Here is a 515-residue protein sequence, read N- to C-terminus: Probable cytosol aminopeptidase (515 aa).

Residues Lys279 and Asp284 each coordinate Mn(2+). Lys291 is an active-site residue. Residues Asp302, Asp361, and Glu363 each coordinate Mn(2+). The active site involves Arg365.

Belongs to the peptidase M17 family. Requires Mn(2+) as cofactor.

The protein localises to the cytoplasm. It carries out the reaction Release of an N-terminal amino acid, Xaa-|-Yaa-, in which Xaa is preferably Leu, but may be other amino acids including Pro although not Arg or Lys, and Yaa may be Pro. Amino acid amides and methyl esters are also readily hydrolyzed, but rates on arylamides are exceedingly low.. The catalysed reaction is Release of an N-terminal amino acid, preferentially leucine, but not glutamic or aspartic acids.. In terms of biological role, presumably involved in the processing and regular turnover of intracellular proteins. Catalyzes the removal of unsubstituted N-terminal amino acids from various peptides. The polypeptide is Probable cytosol aminopeptidase (Mycobacterium bovis (strain ATCC BAA-935 / AF2122/97)).